Reading from the N-terminus, the 516-residue chain is Nucleolar complex protein 4 homolog (516 aa).

3 consecutive transmembrane segments (helical) span residues Ala-297–His-317, Phe-347–Ala-367, and Leu-375–Leu-395.

This sequence belongs to the CBF/MAK21 family.

Its subcellular location is the nucleus membrane. The protein localises to the nucleus. It localises to the nucleolus. The protein is Nucleolar complex protein 4 homolog (NOC4L) of Homo sapiens (Human).